The primary structure comprises 207 residues: Large ribosomal subunit protein uL4 (207 aa).

Positions 58–78 (AGGGKKPWRQKGTGRARHGSI) are disordered. Residues 63–77 (KPWRQKGTGRARHGS) are compositionally biased toward basic residues.

Belongs to the universal ribosomal protein uL4 family. Part of the 50S ribosomal subunit.

One of the primary rRNA binding proteins, this protein initially binds near the 5'-end of the 23S rRNA. It is important during the early stages of 50S assembly. It makes multiple contacts with different domains of the 23S rRNA in the assembled 50S subunit and ribosome. Its function is as follows. Forms part of the polypeptide exit tunnel. This chain is Large ribosomal subunit protein uL4, found in Aster yellows witches'-broom phytoplasma (strain AYWB).